Here is a 116-residue protein sequence, read N- to C-terminus: UPF0342 protein RBAM_010030 (116 aa).

This sequence belongs to the UPF0342 family.

This is UPF0342 protein RBAM_010030 from Bacillus velezensis (strain DSM 23117 / BGSC 10A6 / LMG 26770 / FZB42) (Bacillus amyloliquefaciens subsp. plantarum).